The primary structure comprises 86 residues: RNA-binding protein Hfq (86 aa).

Residues 9–68 (DPYLNTLRKEKVPVSIYLVNGIKLQGSIESFDQFVVLLKNTVSQMVYKHAISTVVPARPV) form the Sm domain. Residues 66–86 (RPVRLPSPTDSEHGDSEPGNA) form a disordered region. Positions 75-86 (DSEHGDSEPGNA) are enriched in basic and acidic residues.

Belongs to the Hfq family. In terms of assembly, homohexamer.

RNA chaperone that binds small regulatory RNA (sRNAs) and mRNAs to facilitate mRNA translational regulation in response to envelope stress, environmental stress and changes in metabolite concentrations. Also binds with high specificity to tRNAs. This is RNA-binding protein Hfq from Pseudomonas putida (strain ATCC 700007 / DSM 6899 / JCM 31910 / BCRC 17059 / LMG 24140 / F1).